Consider the following 143-residue polypeptide: Nucleoside diphosphate kinase (143 aa).

ATP-binding residues include lysine 11, phenylalanine 59, arginine 87, threonine 93, arginine 104, and asparagine 114. Histidine 117 serves as the catalytic Pros-phosphohistidine intermediate.

It belongs to the NDK family. In terms of assembly, homotetramer. It depends on Mg(2+) as a cofactor.

The protein localises to the cytoplasm. The catalysed reaction is a 2'-deoxyribonucleoside 5'-diphosphate + ATP = a 2'-deoxyribonucleoside 5'-triphosphate + ADP. It carries out the reaction a ribonucleoside 5'-diphosphate + ATP = a ribonucleoside 5'-triphosphate + ADP. Its function is as follows. Major role in the synthesis of nucleoside triphosphates other than ATP. The ATP gamma phosphate is transferred to the NDP beta phosphate via a ping-pong mechanism, using a phosphorylated active-site intermediate. This chain is Nucleoside diphosphate kinase, found in Shewanella baltica (strain OS223).